Here is a 349-residue protein sequence, read N- to C-terminus: Small ribosomal subunit protein uS2 (349 aa).

It belongs to the universal ribosomal protein uS2 family.

In Methylobacterium sp. (strain 4-46), this protein is Small ribosomal subunit protein uS2.